The following is a 1918-amino-acid chain: Diacylglycerol kinase eta (1918 aa).

Basic and acidic residues predominate over residues 1–10 (MAHLKLDTLH). The tract at residues 1-37 (MAHLKLDTLHVQRSPRGSRRSSPSSGRSSACSSGSIS) is disordered. The span at 20 to 37 (RSSPSSGRSSACSSGSIS) shows a compositional bias: low complexity. Residues 82–175 (AIIKEGFLLK…WLGGLKTATA (94 aa)) enclose the PH domain. 2 consecutive Phorbol-ester/DAG-type zinc fingers follow at residues 195 to 245 (HHHW…IANC) and 268 to 319 (PHQW…AVAC). The DAGKc domain maps to 350 to 486 (GNFSPLLVFV…DRWSIMVFEK (137 aa)). Disordered regions lie at residues 783–805 (GANI…NTPT), 1017–1067 (TTLC…DDNP), 1177–1212 (PNTI…GDSI), and 1380–1399 (ERDK…TEEA). Residues 1177–1189 (PNTILTTSTSPTK) are compositionally biased toward polar residues. One can recognise an SAM domain in the interval 1855–1918 (WSVNEVVTWL…LQAIKDLSEN (64 aa)).

The protein belongs to the eukaryotic diacylglycerol kinase family.

The protein resides in the cytoplasm. The catalysed reaction is a 1,2-diacyl-sn-glycerol + ATP = a 1,2-diacyl-sn-glycero-3-phosphate + ADP + H(+). Phosphorylates diacylglycerol (DAG) to generate phosphatidic acid (PA). The polypeptide is Diacylglycerol kinase eta (Drosophila erecta (Fruit fly)).